A 412-amino-acid polypeptide reads, in one-letter code: Isocitrate dehydrogenase [NADP] cytoplasmic (412 aa).

Residues 75-77 (TIT) and Arg82 contribute to the NADP(+) site. Thr77 serves as a coordination point for substrate. Residues 94–100 (SPNGTIR), Arg109, and Arg132 each bind substrate. Asp252 is a Mn(2+) binding site. NADP(+) is bound at residue Lys260. Mn(2+) is bound at residue Asp275. NADP(+)-binding positions include 310–315 (GTVTRH) and Asn328.

This sequence belongs to the isocitrate and isopropylmalate dehydrogenases family. As to quaternary structure, homodimer. The cofactor is Mg(2+). Mn(2+) serves as cofactor. The N-terminus is blocked.

The protein resides in the cytoplasm. It carries out the reaction D-threo-isocitrate + NADP(+) = 2-oxoglutarate + CO2 + NADPH. Its activity is regulated as follows. By catabolite repression. Functionally, may function in the production of NADPH for fatty acid and sterol synthesis. The chain is Isocitrate dehydrogenase [NADP] cytoplasmic (IDP2) from Saccharomyces cerevisiae (strain ATCC 204508 / S288c) (Baker's yeast).